A 957-amino-acid polypeptide reads, in one-letter code: ADAMTS-like protein 2 (957 aa).

Residues 1–29 (MDGRRQHPHWAWSLLAVAVVAGGAAPTEA) form the signal peptide. The TSP type-1 1 domain maps to 47 to 106 (AYWWGEWTKWTACSRSCGGGVTSQERHCLQQRRKSVPGTGNRTCVGTSKRYQLCRVQECP). 3 disulfide bridges follow: Cys59–Cys100, Cys63–Cys105, and Cys74–Cys90. 8 N-linked (GlcNAc...) asparagine glycosylation sites follow: Asn87, Asn374, Asn435, Asn482, Asn518, Asn530, Asn539, and Asn550. Polar residues predominate over residues 532–544 (SSEAPFPNTSASP). The tract at residues 532 to 568 (SSEAPFPNTSASPPNLAGNRTHKARTRPKARKQGVSP) is disordered. The span at 551–563 (RTHKARTRPKARK) shows a compositional bias: basic residues. TSP type-1 domains lie at 570 to 624 (DMYR…EFCA), 628 to 692 (CQPR…PACG), 694 to 742 (QWEM…TGPP), 743 to 801 (CDRQ…KNCP), 803 to 857 (HWLA…TCFE), and 859 to 914 (PCFK…QPCP). The N-linked (GlcNAc...) asparagine glycan is linked to Asn737. The N-linked (GlcNAc...) asparagine glycan is linked to Asn813. Residues 918-956 (PDDSCQDQPGTNCALAIKVNLCGHWYYSKACCRSCRPPH) form the PLAC domain.

As to quaternary structure, interacts with LTBP1. In terms of processing, glycosylated. Can be O-fucosylated by POFUT2 on a serine or a threonine residue found within the consensus sequence C1-X(2)-(S/T)-C2-G of the TSP type-1 repeat domains where C1 and C2 are the first and second cysteine residue of the repeat, respectively. Fucosylated repeats can then be further glycosylated by the addition of a beta-1,3-glucose residue by the glucosyltransferase, B3GALTL. Fucosylation mediates the efficient secretion of ADAMTS family members. Can also be C-glycosylated with one or two mannose molecules on tryptophan residues within the consensus sequence W-X-X-W of the TPRs, and N-glycosylated. These other glycosylations can also facilitate secretion.

It localises to the secreted. The sequence is that of ADAMTS-like protein 2 (Adamtsl2) from Mus musculus (Mouse).